We begin with the raw amino-acid sequence, 122 residues long: Large ribosomal subunit protein bL12 (122 aa).

It belongs to the bacterial ribosomal protein bL12 family. As to quaternary structure, homodimer. Part of the ribosomal stalk of the 50S ribosomal subunit. Forms a multimeric L10(L12)X complex, where L10 forms an elongated spine to which 2 to 4 L12 dimers bind in a sequential fashion. Binds GTP-bound translation factors.

In terms of biological role, forms part of the ribosomal stalk which helps the ribosome interact with GTP-bound translation factors. Is thus essential for accurate translation. The protein is Large ribosomal subunit protein bL12 of Stenotrophomonas maltophilia (strain R551-3).